Reading from the N-terminus, the 497-residue chain is Aldehyde dehydrogenase (497 aa).

242–247 (GSTLVG) serves as a coordination point for NAD(+). Catalysis depends on E265, which acts as the Proton acceptor. Residue C299 is the Nucleophile of the active site.

It belongs to the aldehyde dehydrogenase family.

The enzyme catalyses an aldehyde + NAD(+) + H2O = a carboxylate + NADH + 2 H(+). It functions in the pathway alcohol metabolism; ethanol degradation; acetate from ethanol: step 2/2. This chain is Aldehyde dehydrogenase (aldA), found in Aspergillus niger.